The chain runs to 346 residues: Annexin A1 (346 aa).

Ala-2 bears the N-acetylalanine mark. Position 5 is a phosphoserine; by TRPM7 (Ser-5). Gln-19 participates in a covalent cross-link: Isoglutamyl lysine isopeptide (Gln-Lys) (interchain with K-?). Position 21 is a phosphotyrosine; by EGFR (Tyr-21). The residue at position 27 (Ser-27) is a Phosphoserine; by PKC. Phosphoserine is present on residues Ser-34 and Ser-37. Thr-41 carries the phosphothreonine modification. 4 Annexin repeats span residues 42–113 (FNPS…ALLK), 114–185 (TPAQ…SLAK), 197–269 (DLAD…AIVK), and 273–344 (SKPA…ALCG). An N6-acetyllysine modification is found at Lys-58. Residues Gly-59, Val-60, Glu-62, Lys-97, Leu-100, Glu-105, Met-127, Gly-129, Gly-131, Thr-132, and Glu-134 each contribute to the Ca(2+) site. Thr-136 is subject to Phosphothreonine. Residues Asp-171, Gly-210, and Arg-213 each coordinate Ca(2+). Lys-214 participates in a covalent cross-link: Glycyl lysine isopeptide (Lys-Gly) (interchain with G-Cter in SUMO1); alternate. A Glycyl lysine isopeptide (Lys-Gly) (interchain with G-Cter in SUMO2); alternate cross-link involves residue Lys-214. Gly-215 contacts Ca(2+). Lys-239 bears the N6-acetyllysine mark. Residues Asp-253, Glu-255, and Leu-256 each coordinate Ca(2+). Lys-257 is covalently cross-linked (Glycyl lysine isopeptide (Lys-Gly) (interchain with G-Cter in SUMO1)). Ca(2+) contacts are provided by Glu-261, Met-286, Gly-288, and Gly-290. Lys-312 carries the N6-acetyllysine modification. Residues Cys-324 and Cys-343 are joined by a disulfide bond. Ca(2+) contacts are provided by Leu-328, Glu-330, and Thr-331. Lys-332 participates in a covalent cross-link: Glycyl lysine isopeptide (Lys-Gly) (interchain with G-Cter in SUMO1). Residue Glu-336 participates in Ca(2+) binding.

It belongs to the annexin family. As to quaternary structure, homodimer; non-covalently linked. Homodimer; linked by transglutamylation. Homodimers linked by transglutamylation are observed in placenta, but not in other tissues. Interacts with S100A11. Heterotetramer, formed by two molecules each of S100A11 and ANXA1. Interacts with DYSF. Interacts with EGFR. Phosphorylated by protein kinase C, EGFR and TRPM7. Phosphorylated in response to EGF treatment. Post-translationally, sumoylated. In terms of processing, proteolytically cleaved by cathepsin CTSG to release the active N-terminal peptide Ac2-26.

Its subcellular location is the nucleus. It is found in the cytoplasm. The protein localises to the cell projection. The protein resides in the cilium. It localises to the basolateral cell membrane. Its subcellular location is the lateral cell membrane. It is found in the cell membrane. The protein localises to the apical cell membrane. The protein resides in the membrane. It localises to the early endosome. Its subcellular location is the cytoplasmic vesicle membrane. It is found in the endosome membrane. The protein localises to the secreted. The protein resides in the extracellular space. It localises to the extracellular exosome. Its subcellular location is the cytoplasmic vesicle. It is found in the secretory vesicle lumen. The protein localises to the phagocytic cup. Functionally, plays important roles in the innate immune response as effector of glucocorticoid-mediated responses and regulator of the inflammatory process. Has anti-inflammatory activity. Plays a role in glucocorticoid-mediated down-regulation of the early phase of the inflammatory response. Contributes to the adaptive immune response by enhancing signaling cascades that are triggered by T-cell activation, regulates differentiation and proliferation of activated T-cells. Promotes the differentiation of T-cells into Th1 cells and negatively regulates differentiation into Th2 cells. Has no effect on unstimulated T-cells. Negatively regulates hormone exocytosis via activation of the formyl peptide receptors and reorganization of the actin cytoskeleton. Has high affinity for Ca(2+) and can bind up to eight Ca(2+) ions. Displays Ca(2+)-dependent binding to phospholipid membranes. Plays a role in the formation of phagocytic cups and phagosomes. Plays a role in phagocytosis by mediating the Ca(2+)-dependent interaction between phagosomes and the actin cytoskeleton. In terms of biological role, functions at least in part by activating the formyl peptide receptors and downstream signaling cascades. Promotes chemotaxis of granulocytes and monocytes via activation of the formyl peptide receptors. Promotes rearrangement of the actin cytoskeleton, cell polarization and cell migration. Promotes resolution of inflammation and wound healing. Acts via neutrophil N-formyl peptide receptors to enhance the release of CXCL2. In Pan troglodytes (Chimpanzee), this protein is Annexin A1 (ANXA1).